Here is a 446-residue protein sequence, read N- to C-terminus: Phosphoglucosamine mutase (446 aa).

The active-site Phosphoserine intermediate is the S102. Mg(2+)-binding residues include S102, D241, D243, and D245. S102 carries the phosphoserine modification.

This sequence belongs to the phosphohexose mutase family. The cofactor is Mg(2+). Post-translationally, activated by phosphorylation.

The enzyme catalyses alpha-D-glucosamine 1-phosphate = D-glucosamine 6-phosphate. Catalyzes the conversion of glucosamine-6-phosphate to glucosamine-1-phosphate. The protein is Phosphoglucosamine mutase of Yersinia enterocolitica serotype O:8 / biotype 1B (strain NCTC 13174 / 8081).